The sequence spans 206 residues: Putative archaetidylserine decarboxylase proenzyme (206 aa).

Ser-172 serves as the catalytic Schiff-base intermediate with substrate; via pyruvic acid. Residue Ser-172 is modified to Pyruvic acid (Ser); by autocatalysis.

This sequence belongs to the phosphatidylserine decarboxylase family. PSD-A subfamily. In terms of assembly, heterodimer of a large membrane-associated beta subunit and a small pyruvoyl-containing alpha subunit. Pyruvate serves as cofactor. In terms of processing, is synthesized initially as an inactive proenzyme. Formation of the active enzyme involves a self-maturation process in which the active site pyruvoyl group is generated from an internal serine residue via an autocatalytic post-translational modification. Two non-identical subunits are generated from the proenzyme in this reaction, and the pyruvate is formed at the N-terminus of the alpha chain, which is derived from the carboxyl end of the proenzyme. The post-translation cleavage follows an unusual pathway, termed non-hydrolytic serinolysis, in which the side chain hydroxyl group of the serine supplies its oxygen atom to form the C-terminus of the beta chain, while the remainder of the serine residue undergoes an oxidative deamination to produce ammonia and the pyruvoyl prosthetic group on the alpha chain.

The protein localises to the cell membrane. The catalysed reaction is archaetidylserine + H(+) = archaetidylethanolamine + CO2. In terms of biological role, catalyzes the formation of archaetidylethanolamine (PtdEtn) from archaetidylserine (PtdSer). This Methanocaldococcus jannaschii (strain ATCC 43067 / DSM 2661 / JAL-1 / JCM 10045 / NBRC 100440) (Methanococcus jannaschii) protein is Putative archaetidylserine decarboxylase proenzyme.